Consider the following 201-residue polypeptide: Ras-related protein RabA (201 aa).

15–22 contributes to the GTP binding site; sequence GDSGVGKS. The Effector region signature appears at 37 to 45; it reads YISTIGVDF. GTP-binding positions include 63 to 67 and 121 to 124; these read DTAGQ and NKSD. C198 is subject to Cysteine methyl ester. The S-geranylgeranyl cysteine moiety is linked to residue C198. Positions 199-201 are cleaved as a propeptide — removed in mature form; sequence IIN.

This sequence belongs to the small GTPase superfamily. Rab family.

Its subcellular location is the cell membrane. The polypeptide is Ras-related protein RabA (rabA) (Dictyostelium discoideum (Social amoeba)).